We begin with the raw amino-acid sequence, 100 residues long: Integration host factor subunit alpha (100 aa).

Positions Phe-53–Ile-72 are disordered.

The protein belongs to the bacterial histone-like protein family. As to quaternary structure, heterodimer of an alpha and a beta chain.

Its function is as follows. This protein is one of the two subunits of integration host factor, a specific DNA-binding protein that functions in genetic recombination as well as in transcriptional and translational control. The polypeptide is Integration host factor subunit alpha (Pseudomonas putida (strain ATCC 700007 / DSM 6899 / JCM 31910 / BCRC 17059 / LMG 24140 / F1)).